Reading from the N-terminus, the 184-residue chain is ATP synthase subunit delta (184 aa).

This sequence belongs to the ATPase delta chain family. F-type ATPases have 2 components, F(1) - the catalytic core - and F(0) - the membrane proton channel. F(1) has five subunits: alpha(3), beta(3), gamma(1), delta(1), epsilon(1). CF(0) has four main subunits: a(1), b(1), b'(1) and c(10-14). The alpha and beta chains form an alternating ring which encloses part of the gamma chain. F(1) is attached to F(0) by a central stalk formed by the gamma and epsilon chains, while a peripheral stalk is formed by the delta, b and b' chains.

The protein localises to the cell inner membrane. In terms of biological role, f(1)F(0) ATP synthase produces ATP from ADP in the presence of a proton or sodium gradient. F-type ATPases consist of two structural domains, F(1) containing the extramembraneous catalytic core and F(0) containing the membrane proton channel, linked together by a central stalk and a peripheral stalk. During catalysis, ATP synthesis in the catalytic domain of F(1) is coupled via a rotary mechanism of the central stalk subunits to proton translocation. Functionally, this protein is part of the stalk that links CF(0) to CF(1). It either transmits conformational changes from CF(0) to CF(1) or is implicated in proton conduction. The sequence is that of ATP synthase subunit delta from Erythrobacter litoralis (strain HTCC2594).